The primary structure comprises 496 residues: Transmembrane transporter swnT (496 aa).

Helical transmembrane passes span 40-60, 72-92, 124-144, 162-182, and 191-211; these read LSAI…PLIL, VFWG…TLAE, AMIS…SVPL, WMGF…ACFE, and AFLL…FAMA. A glycan (N-linked (GlcNAc...) asparagine) is linked at asparagine 225. Transmembrane regions (helical) follow at residues 270–290, 314–334, 368–388, 396–416, 434–454, and 467–487; these read LLWT…AVLV, AAAI…VWSI, PIWS…LYLA, LIAT…VLVL, GLVA…FYCF, and YVSG…ILYA.

This sequence belongs to the amino acid-polyamine-organocation (APC) superfamily. Amino acid/choline transporter (ACT) (TC 2.A.3.4) family.

It is found in the membrane. Its function is as follows. Transmembrane transporter; part of the gene cluster that mediates the biosynthesis of swainsonine, a cytotoxic fungal alkaloid and a potential cancer therapy drug. Does not mediate the secretion of SW and the exact role of swnT in SW biosynthesis remains to be determined. This Metarhizium robertsii (strain ARSEF 23 / ATCC MYA-3075) (Metarhizium anisopliae (strain ARSEF 23)) protein is Transmembrane transporter swnT.